A 1212-amino-acid polypeptide reads, in one-letter code: Filamin-A-interacting protein 1 (1212 aa).

A compositionally biased stretch (polar residues) spans 1 to 15; that stretch reads MRSRNQGGESSSNGH. The interval 1-73 is disordered; it reads MRSRNQGGES…SEKKTKKSVE (73 aa). Basic and acidic residues-rich tracts occupy residues 32-47 and 60-73; these read PSEDAKKNKANRKEED and PSGESEKKTKKSVE. The residue at position 137 (serine 137) is a Phosphoserine. Coiled coils occupy residues 191–575 and 623–777; these read DYMN…DELM and PEDN…ELEL. Disordered stretches follow at residues 871–898 and 948–975; these read WMRKRENGPSTPQEKGPRPNQGAGHPGE and KPRITIIPSPNVMSQKPKSADPTLGPER. At serine 978 the chain carries Phosphoserine. The segment at 1102–1190 is disordered; the sequence is VSTGTVLRSP…TKFQPRAETQ (89 aa). Low complexity predominate over residues 1124 to 1138; it reads VTSTITITPVTTSST. Residues 1139–1155 are compositionally biased toward polar residues; it reads RGTQSVSGQDGSSQRPT.

It belongs to the FILIP1 family. In terms of assembly, interacts with FLNA. Interacts with RHOD (in GTP-bound form). In terms of tissue distribution, expressed in muscle tissue, including heart. Found in cortical ventricular zone.

It localises to the cytoplasm. The protein localises to the cytoskeleton. The protein resides in the stress fiber. Its function is as follows. By acting through a filamin-A/F-actin axis, it controls the start of neocortical cell migration from the ventricular zone. May be able to induce the degradation of Filamin A. In Rattus norvegicus (Rat), this protein is Filamin-A-interacting protein 1 (Filip1).